The chain runs to 584 residues: Kinesin-like protein KIN-10C (584 aa).

The region spanning 11–324 (PVRVVLRVRP…VSLAARSRHV (314 aa)) is the Kinesin motor domain. 99–106 (GATGSGKT) contacts ATP. Disordered regions lie at residues 377–398 (SMSH…AMDQ) and 445–469 (DKTG…KQRT).

This sequence belongs to the TRAFAC class myosin-kinesin ATPase superfamily. Kinesin family. KIN-10 subfamily.

This is Kinesin-like protein KIN-10C from Oryza sativa subsp. japonica (Rice).